The following is a 195-amino-acid chain: Imidazoleglycerol-phosphate dehydratase (195 aa).

This sequence belongs to the imidazoleglycerol-phosphate dehydratase family.

It localises to the cytoplasm. It catalyses the reaction D-erythro-1-(imidazol-4-yl)glycerol 3-phosphate = 3-(imidazol-4-yl)-2-oxopropyl phosphate + H2O. It participates in amino-acid biosynthesis; L-histidine biosynthesis; L-histidine from 5-phospho-alpha-D-ribose 1-diphosphate: step 6/9. The sequence is that of Imidazoleglycerol-phosphate dehydratase from Alkaliphilus metalliredigens (strain QYMF).